We begin with the raw amino-acid sequence, 262 residues long: uncharacterized protein (262 aa).

2 disordered regions span residues 1 to 30 (MGKKKFIENEDGTTEVQETESEAPKDKKEK) and 232 to 262 (EEEEVEDEADEETDVKEKVKEEEDEDEDMEE). Acidic residues-rich tracts occupy residues 9-21 (NEDGTTEVQETES), 232-245 (EEEEVEDEADEETD), and 253-262 (EEDEDEDMEE).

This is an uncharacterized protein from Caenorhabditis elegans.